A 116-amino-acid polypeptide reads, in one-letter code: Peptidyl-tRNA hydrolase (116 aa).

It belongs to the PTH2 family.

Its subcellular location is the cytoplasm. The catalysed reaction is an N-acyl-L-alpha-aminoacyl-tRNA + H2O = an N-acyl-L-amino acid + a tRNA + H(+). The natural substrate for this enzyme may be peptidyl-tRNAs which drop off the ribosome during protein synthesis. The polypeptide is Peptidyl-tRNA hydrolase (Methanococcus maripaludis (strain C6 / ATCC BAA-1332)).